A 142-amino-acid chain; its full sequence is MAKKIEAYIKLQVKSGSANPSPPVGPALGQKGVNIMEFCKAFNARTEKMEKGMPIPVVITVYSDRSFTFETKTPPASFLLKQAAGLKSGSSRPNTQKVGTIKRAKVQEIAELKAADMTGADVEAMTRSIEGTARSMGLVVED.

Belongs to the universal ribosomal protein uL11 family. As to quaternary structure, part of the ribosomal stalk of the 50S ribosomal subunit. Interacts with L10 and the large rRNA to form the base of the stalk. L10 forms an elongated spine to which L12 dimers bind in a sequential fashion forming a multimeric L10(L12)X complex. In terms of processing, one or more lysine residues are methylated.

Functionally, forms part of the ribosomal stalk which helps the ribosome interact with GTP-bound translation factors. This is Large ribosomal subunit protein uL11 from Shewanella amazonensis (strain ATCC BAA-1098 / SB2B).